Reading from the N-terminus, the 389-residue chain is Tubulin-like protein CetZ3 (389 aa).

Residues 10-14 (QAGGK), 110-112 (GTG), Glu142, Asn169, and Asn187 each bind GTP.

The protein belongs to the CetZ family.

It localises to the cytoplasm. In terms of biological role, involved in cell shape control. This is Tubulin-like protein CetZ3 from Haloferax volcanii (strain ATCC 29605 / DSM 3757 / JCM 8879 / NBRC 14742 / NCIMB 2012 / VKM B-1768 / DS2) (Halobacterium volcanii).